A 433-amino-acid polypeptide reads, in one-letter code: MSDLVSRPGLSERTARAVADRLAGRAGWRNPLIFAGPAVVASIAYMDPGNFATNIQAGARYGYDLLWVVLLASLIAMLFQGLSARLGIVTGRNLAELCRDTLPPALTIPMWIISEIAAMATDLAEFLGGAIGIALLAHLPLMAGMAITGIVTYGILLLDRRGFRPMELVIGALVGVIALCYLAELLIVPVHWRQAALHTVLPSLPDAEALTIAVGIVGATVMPHALFLHSGLSGARVAPQDAAQRRRLVRYSNIEVLAALGVAGMVNMAMVAMAAGAFHPAHQGIAEIGEAYRTLSPLLGAGAAVIFLISLLASGVSSSVVGTLAGQMVMQGFVGFSIPIWLRRALTMIPGFVVIGLGVNPTRALVLSQVVLSLALPVPMLALLWFSTRRALMGALAVRGITAIAAIGGAIVILGLNVILLLQIFGVNVPLPG.

The next 11 membrane-spanning stretches (helical) occupy residues leucine 32–alanine 52, glycine 62–leucine 82, threonine 101–threonine 121, isoleucine 131–valine 151, leucine 168–valine 188, alanine 209–histidine 229, valine 256–glycine 276, serine 296–valine 316, alanine 345–leucine 365, valine 366–phenylalanine 386, and isoleucine 401–leucine 421.

It belongs to the NRAMP family.

Its subcellular location is the cell inner membrane. In terms of biological role, h(+)-stimulated, divalent metal cation uptake system. The sequence is that of Divalent metal cation transporter MntH from Acidiphilium cryptum (strain JF-5).